The following is a 180-amino-acid chain: DNA-directed RNA polymerase subunit Rpo7 (180 aa).

Positions 82 to 165 constitute an S1 motif domain; sequence QEVVEGEVLQ…RLPRIALTMR (84 aa).

The protein belongs to the eukaryotic RPB7/RPC8 RNA polymerase subunit family. Part of the 13-subunit RNA polymerase complex. Forms a stalk with Rpo4 that extends from the main structure.

It localises to the cytoplasm. The enzyme catalyses RNA(n) + a ribonucleoside 5'-triphosphate = RNA(n+1) + diphosphate. Its function is as follows. DNA-dependent RNA polymerase (RNAP) catalyzes the transcription of DNA into RNA using the four ribonucleoside triphosphates as substrates. This Saccharolobus solfataricus (strain ATCC 35092 / DSM 1617 / JCM 11322 / P2) (Sulfolobus solfataricus) protein is DNA-directed RNA polymerase subunit Rpo7.